The sequence spans 245 residues: Thiopurine S-methyltransferase (245 aa).

Serine 14 is modified (phosphoserine). Residue 29–40 (WQGKWVTGKTIF) participates in S-adenosyl-L-methionine binding. Phenylalanine 40 lines the substrate pocket. The residue at position 58 (lysine 58) is an N6-acetyllysine. Positions 69, 90, and 152 each coordinate S-adenosyl-L-methionine.

Belongs to the class I-like SAM-binding methyltransferase superfamily. TPMT family. As to quaternary structure, monomer.

The protein resides in the cytoplasm. It catalyses the reaction S-adenosyl-L-methionine + a thiopurine = S-adenosyl-L-homocysteine + a thiopurine S-methylether.. The polypeptide is Thiopurine S-methyltransferase (TPMT) (Equus caballus (Horse)).